A 648-amino-acid chain; its full sequence is DNA polymerase (648 aa).

Belongs to the DNA polymerase type-A family.

It catalyses the reaction DNA(n) + a 2'-deoxyribonucleoside 5'-triphosphate = DNA(n+1) + diphosphate. In terms of biological role, replicates the viral genomic DNA. This polymerase possesses two enzymatic activities: DNA synthesis (polymerase) and an exonucleolytic activity that degrades single-stranded DNA in the 3'-5' direction. This chain is DNA polymerase (L), found in Bacillus subtilis (Bacteriophage SP02).